The sequence spans 725 residues: Ribosomal RNA large subunit methyltransferase K/L (725 aa).

The 112-residue stretch at 46 to 157 (VGYRLCLWSR…KGQAVLSLDL (112 aa)) folds into the THUMP domain.

This sequence belongs to the methyltransferase superfamily. RlmKL family.

The protein localises to the cytoplasm. It catalyses the reaction guanosine(2445) in 23S rRNA + S-adenosyl-L-methionine = N(2)-methylguanosine(2445) in 23S rRNA + S-adenosyl-L-homocysteine + H(+). The catalysed reaction is guanosine(2069) in 23S rRNA + S-adenosyl-L-methionine = N(2)-methylguanosine(2069) in 23S rRNA + S-adenosyl-L-homocysteine + H(+). Functionally, specifically methylates the guanine in position 2445 (m2G2445) and the guanine in position 2069 (m7G2069) of 23S rRNA. This is Ribosomal RNA large subunit methyltransferase K/L from Stutzerimonas stutzeri (strain A1501) (Pseudomonas stutzeri).